We begin with the raw amino-acid sequence, 1128 residues long: Translation initiation factor IF-2 (1128 aa).

The segment at 57–519 (NSDKQILSIN…KETTRQRQKR (463 aa)) is disordered. The segment covering 70-83 (NKKDNYKQNKEDKS) has biased composition (basic and acidic residues). The span at 100–110 (KKQLLNKPLNK) shows a compositional bias: low complexity. Over residues 120–146 (QLKNPNKPNIYNSSQSQANLTNQNTKS) the composition is skewed to polar residues. A compositionally biased stretch (basic and acidic residues) spans 147–158 (KPSEHFNKDKKT). Residues 182–196 (KNINNNLKSNESSKN) show a composition bias toward low complexity. A compositionally biased stretch (basic and acidic residues) spans 201–214 (GDKRELSLKPDQNR). Composition is skewed to polar residues over residues 243–267 (KQNN…NRPG) and 386–397 (AKTNNQKQNIES). A compositionally biased stretch (basic and acidic residues) spans 432-445 (RKDWDDSAKLEALR). Residues 499 to 519 (HKSTKQFKKKKKETTRQRQKR) are compositionally biased toward basic residues. One can recognise a tr-type G domain in the interval 620–792 (KRPPVITVMG…ILLVSEVEDL (173 aa)). Positions 629 to 636 (GHVDHGKT) are G1. 629–636 (GHVDHGKT) contributes to the GTP binding site. Positions 654–658 (GITQH) are G2. The tract at residues 679–682 (DTPG) is G3. GTP contacts are provided by residues 679 to 683 (DTPGH) and 733 to 736 (NKID). A G4 region spans residues 733-736 (NKID). Residues 769 to 771 (SAI) are G5.

Belongs to the TRAFAC class translation factor GTPase superfamily. Classic translation factor GTPase family. IF-2 subfamily.

Its subcellular location is the cytoplasm. Functionally, one of the essential components for the initiation of protein synthesis. Protects formylmethionyl-tRNA from spontaneous hydrolysis and promotes its binding to the 30S ribosomal subunits. Also involved in the hydrolysis of GTP during the formation of the 70S ribosomal complex. This chain is Translation initiation factor IF-2, found in Prochlorococcus marinus (strain MIT 9312).